The sequence spans 201 residues: Potassium-transporting ATPase KdpC subunit (201 aa).

The chain crosses the membrane as a helical span at residues 9–29 (ILVMLALTLITGLLYPLAMTV). Composition is skewed to polar residues over residues 73 to 84 (TTAADPNDSTKT) and 91 to 101 (AANSSGSNLGP). The segment at 73-103 (TTAADPNDSTKTVPAPYNAANSSGSNLGPTS) is disordered.

It belongs to the KdpC family. The system is composed of three essential subunits: KdpA, KdpB and KdpC.

It is found in the cell inner membrane. Part of the high-affinity ATP-driven potassium transport (or Kdp) system, which catalyzes the hydrolysis of ATP coupled with the electrogenic transport of potassium into the cytoplasm. This subunit acts as a catalytic chaperone that increases the ATP-binding affinity of the ATP-hydrolyzing subunit KdpB by the formation of a transient KdpB/KdpC/ATP ternary complex. This Bradyrhizobium sp. (strain BTAi1 / ATCC BAA-1182) protein is Potassium-transporting ATPase KdpC subunit.